A 239-amino-acid polypeptide reads, in one-letter code: Probable transcriptional regulatory protein ACL_0044 (239 aa).

The protein belongs to the TACO1 family.

The protein resides in the cytoplasm. This Acholeplasma laidlawii (strain PG-8A) protein is Probable transcriptional regulatory protein ACL_0044.